We begin with the raw amino-acid sequence, 646 residues long: uncharacterized protein (646 aa).

The next 8 helical transmembrane spans lie at 20–42 (ILSR…LYLL), 55–77 (FLAG…IHQV), 97–115 (LLHF…HYML), 127–149 (YTFD…FSYW), 159–181 (IAFV…FFKL), 188–206 (ILLG…LLLA), 216–238 (YGAV…YHLF), and 251–273 (WVTM…IGTA).

Its subcellular location is the cell membrane. This is an uncharacterized protein from Bacillus subtilis (strain 168).